The sequence spans 248 residues: Ubiquinone/menaquinone biosynthesis C-methyltransferase UbiE (248 aa).

Residues Ser68 and Asp92 each contribute to the S-adenosyl-L-methionine site.

It belongs to the class I-like SAM-binding methyltransferase superfamily. MenG/UbiE family.

The catalysed reaction is a 2-demethylmenaquinol + S-adenosyl-L-methionine = a menaquinol + S-adenosyl-L-homocysteine + H(+). It carries out the reaction a 2-methoxy-6-(all-trans-polyprenyl)benzene-1,4-diol + S-adenosyl-L-methionine = a 5-methoxy-2-methyl-3-(all-trans-polyprenyl)benzene-1,4-diol + S-adenosyl-L-homocysteine + H(+). It functions in the pathway quinol/quinone metabolism; menaquinone biosynthesis; menaquinol from 1,4-dihydroxy-2-naphthoate: step 2/2. It participates in cofactor biosynthesis; ubiquinone biosynthesis. Its function is as follows. Methyltransferase required for the conversion of demethylmenaquinol (DMKH2) to menaquinol (MKH2) and the conversion of 2-polyprenyl-6-methoxy-1,4-benzoquinol (DDMQH2) to 2-polyprenyl-3-methyl-6-methoxy-1,4-benzoquinol (DMQH2). The sequence is that of Ubiquinone/menaquinone biosynthesis C-methyltransferase UbiE from Rickettsia peacockii (strain Rustic).